The primary structure comprises 417 residues: Gamma-glutamyl phosphate reductase (417 aa).

The protein belongs to the gamma-glutamyl phosphate reductase family.

Its subcellular location is the cytoplasm. It carries out the reaction L-glutamate 5-semialdehyde + phosphate + NADP(+) = L-glutamyl 5-phosphate + NADPH + H(+). The protein operates within amino-acid biosynthesis; L-proline biosynthesis; L-glutamate 5-semialdehyde from L-glutamate: step 2/2. Its function is as follows. Catalyzes the NADPH-dependent reduction of L-glutamate 5-phosphate into L-glutamate 5-semialdehyde and phosphate. The product spontaneously undergoes cyclization to form 1-pyrroline-5-carboxylate. The protein is Gamma-glutamyl phosphate reductase of Heliobacterium modesticaldum (strain ATCC 51547 / Ice1).